The following is a 306-amino-acid chain: Methionyl-tRNA formyltransferase (306 aa).

110-113 (SLLP) lines the (6S)-5,6,7,8-tetrahydrofolate pocket.

Belongs to the Fmt family.

It catalyses the reaction L-methionyl-tRNA(fMet) + (6R)-10-formyltetrahydrofolate = N-formyl-L-methionyl-tRNA(fMet) + (6S)-5,6,7,8-tetrahydrofolate + H(+). Attaches a formyl group to the free amino group of methionyl-tRNA(fMet). The formyl group appears to play a dual role in the initiator identity of N-formylmethionyl-tRNA by promoting its recognition by IF2 and preventing the misappropriation of this tRNA by the elongation apparatus. The protein is Methionyl-tRNA formyltransferase of Brucella melitensis biotype 2 (strain ATCC 23457).